The chain runs to 1200 residues: Nuclear envelope pore membrane protein POM 121 (1200 aa).

The interval 1–29 (MSPAAAAADGGERRRPPLGGREGRSRARG) is disordered. Residues 1 to 56 (MSPAAAAADGGERRRPPLGGREGRSRARGYGGPAGAAALGLALLGLALYLVPAAAA) are cisternal side. The segment covering 10–25 (GGERRRPPLGGREGRS) has biased composition (basic and acidic residues). The helical transmembrane segment at 57–77 (LAWLAVGASAAWWGLSREPRG) threads the bilayer. The segment at 76 to 1200 (RGPRALSSFV…QARRQHTRKK (1125 aa)) is pore side. Serine 83 carries the phosphoserine modification. 2 disordered regions span residues 91–167 (HPRP…SAVQ) and 177–196 (PTPLLRPSRRPPHRDCGPLS). The segment covering 143 to 152 (LRQDPRERPG) has biased composition (basic and acidic residues). Serine 244 carries the post-translational modification Phosphoserine. Disordered regions lie at residues 294-328 (KKKRTVAEEDQLHLDGQENKRRRHDSGGSGHSAFE), 345-509 (SLKR…ITAE), 530-627 (PDDA…SDSK), 640-692 (SITP…LATP), 706-744 (PATPKSESDSPLPSSSSAATTASSSTAPPTAASTTPTFK), 1075-1151 (TSGT…SSLS), and 1173-1200 (PSFSIGAGSKTPGARQRLQARRQHTRKK). Basic and acidic residues predominate over residues 298–312 (TVAEEDQLHLDGQEN). Serine 319, serine 322, serine 325, serine 345, serine 355, serine 367, and serine 370 each carry phosphoserine. Low complexity predominate over residues 365–374 (TSSVSSLASA). The segment covering 379–397 (IPSSSRNAITSSYSSTRGI) has biased composition (polar residues). Residues 404-419 (SGPTSSPFSSPASSRS) show a composition bias toward low complexity. Phosphoserine is present on residues serine 408, serine 409, serine 412, serine 413, serine 416, and serine 417. 2 stretches are compositionally biased toward basic and acidic residues: residues 424–433 (RPAKKTREEE) and 446–456 (TDKESPGEKVT). 4 stretches are compositionally biased toward low complexity: residues 463–477 (QQSSWTSPPTPGSSG), 546–574 (PPFTFTLPAVGPAASPASLPAPSSNPLLE), 581–598 (ESPAPSSSEPAEAATVAA), and 605–621 (PSLLAPLVSPLAGPLAS). Residues 640–657 (SITPLTDSKSSGVSQAEQ) are compositionally biased toward polar residues. 4 stretches are compositionally biased toward low complexity: residues 658–669 (SVSTPASTASSP), 681–692 (SPPASSSSLATP), 715–742 (SPLPSSSSAATTASSSTAPPTAASTTPT), and 1075–1099 (TSGTFSFGSGQSGTPGTTTSFGSLS). Polar residues predominate over residues 1100-1121 (QNTLGAPSQGSPFAFSVGSTPE). The segment covering 1190–1200 (LQARRQHTRKK) has biased composition (basic residues).

It belongs to the POM121 family. In terms of processing, proteolytically cleaved by caspase-3 during apoptosis.

Its subcellular location is the nucleus. The protein localises to the nuclear pore complex. It localises to the nucleus membrane. It is found in the endoplasmic reticulum membrane. Its function is as follows. Essential component of the nuclear pore complex (NPC). The repeat-containing domain may be involved in anchoring components of the pore complex to the pore membrane. When overexpressed in cells induces the formation of cytoplasmic annulate lamellae (AL). The protein is Nuclear envelope pore membrane protein POM 121 (Pom121) of Mus musculus (Mouse).